Reading from the N-terminus, the 650-residue chain is DNA ligase (650 aa).

Residues D30–D34 and S79–L80 each bind NAD(+). Catalysis depends on K110, which acts as the N6-AMP-lysine intermediate. NAD(+) is bound by residues R131, E165, and K304. C398, C401, C414, and C419 together coordinate Zn(2+). A BRCT domain is found at D573–K650.

The protein belongs to the NAD-dependent DNA ligase family. LigA subfamily. Requires Mg(2+) as cofactor. It depends on Mn(2+) as a cofactor.

It carries out the reaction NAD(+) + (deoxyribonucleotide)n-3'-hydroxyl + 5'-phospho-(deoxyribonucleotide)m = (deoxyribonucleotide)n+m + AMP + beta-nicotinamide D-nucleotide.. Functionally, DNA ligase that catalyzes the formation of phosphodiester linkages between 5'-phosphoryl and 3'-hydroxyl groups in double-stranded DNA using NAD as a coenzyme and as the energy source for the reaction. It is essential for DNA replication and repair of damaged DNA. The sequence is that of DNA ligase from Helicobacter hepaticus (strain ATCC 51449 / 3B1).